The primary structure comprises 139 residues: DNA-directed RNA polymerase II subunit Rpb4 (139 aa).

It belongs to the eukaryotic RPB4 RNA polymerase subunit family. In terms of assembly, RNA polymerase II consists of 12 different subunits.

It is found in the nucleus. It localises to the chromosome. In terms of biological role, DNA-dependent RNA polymerase catalyzes the transcription of DNA into RNA using the four ribonucleoside triphosphates as substrates. Associates with POLR2G. The polypeptide is DNA-directed RNA polymerase II subunit Rpb4 (Drosophila melanogaster (Fruit fly)).